Here is a 361-residue protein sequence, read N- to C-terminus: Cilia- and flagella-associated protein 263 (361 aa).

This sequence belongs to the CFAP263 family. As to quaternary structure, forms a complex with CFAP184; the interaction is required for functional activity in cilia.

The protein localises to the cell projection. Its subcellular location is the cilium. Its function is as follows. In complex with CFAP263, acts as a regulator of ciliary beating that connects radial spoke 3 (RS3) to the inner dynein arm (IDA) and the nexin-dynein regulatory complex (N-DRC). The complex is positioned parallel to N-DRC and forms a connection between the arch at the base of RS3, the IDA tail and N-DRC. The chain is Cilia- and flagella-associated protein 263 (CFAP263) from Tetrahymena thermophila (strain SB210).